Here is a 279-residue protein sequence, read N- to C-terminus: Ribonuclease Z (279 aa).

Histidine 64, histidine 66, aspartate 68, histidine 69, histidine 134, aspartate 191, and histidine 245 together coordinate Zn(2+). Aspartate 68 serves as the catalytic Proton acceptor.

Belongs to the RNase Z family. As to quaternary structure, homodimer. It depends on Zn(2+) as a cofactor.

The enzyme catalyses Endonucleolytic cleavage of RNA, removing extra 3' nucleotides from tRNA precursor, generating 3' termini of tRNAs. A 3'-hydroxy group is left at the tRNA terminus and a 5'-phosphoryl group is left at the trailer molecule.. In terms of biological role, zinc phosphodiesterase, which displays some tRNA 3'-processing endonuclease activity. Probably involved in tRNA maturation, by removing a 3'-trailer from precursor tRNA. This Methanopyrus kandleri (strain AV19 / DSM 6324 / JCM 9639 / NBRC 100938) protein is Ribonuclease Z.